A 388-amino-acid chain; its full sequence is Dual-specificity RNA methyltransferase RlmN (388 aa).

Residue E109 is the Proton acceptor of the active site. Positions 115 to 354 (EEDRATLCVS…TIVRKTRGDD (240 aa)) constitute a Radical SAM core domain. Residues C122 and C359 are joined by a disulfide bond. The [4Fe-4S] cluster site is built by C129, C133, and C136. S-adenosyl-L-methionine contacts are provided by residues 183–184 (GE), S215, 237–239 (SLH), and N316. C359 serves as the catalytic S-methylcysteine intermediate.

Belongs to the radical SAM superfamily. RlmN family. The cofactor is [4Fe-4S] cluster.

It localises to the cytoplasm. The enzyme catalyses adenosine(2503) in 23S rRNA + 2 reduced [2Fe-2S]-[ferredoxin] + 2 S-adenosyl-L-methionine = 2-methyladenosine(2503) in 23S rRNA + 5'-deoxyadenosine + L-methionine + 2 oxidized [2Fe-2S]-[ferredoxin] + S-adenosyl-L-homocysteine. It carries out the reaction adenosine(37) in tRNA + 2 reduced [2Fe-2S]-[ferredoxin] + 2 S-adenosyl-L-methionine = 2-methyladenosine(37) in tRNA + 5'-deoxyadenosine + L-methionine + 2 oxidized [2Fe-2S]-[ferredoxin] + S-adenosyl-L-homocysteine. Its function is as follows. Specifically methylates position 2 of adenine 2503 in 23S rRNA and position 2 of adenine 37 in tRNAs. m2A2503 modification seems to play a crucial role in the proofreading step occurring at the peptidyl transferase center and thus would serve to optimize ribosomal fidelity. The sequence is that of Dual-specificity RNA methyltransferase RlmN from Enterobacter sp. (strain 638).